Reading from the N-terminus, the 305-residue chain is Coenzyme PQQ synthesis protein B (305 aa).

This sequence belongs to the PqqB family.

The protein operates within cofactor biosynthesis; pyrroloquinoline quinone biosynthesis. In terms of biological role, may be involved in the transport of PQQ or its precursor to the periplasm. The protein is Coenzyme PQQ synthesis protein B of Cupriavidus taiwanensis (strain DSM 17343 / BCRC 17206 / CCUG 44338 / CIP 107171 / LMG 19424 / R1) (Ralstonia taiwanensis (strain LMG 19424)).